The primary structure comprises 605 residues: Formin-binding protein 1-like (605 aa).

The 263-residue stretch at 1–263 (MSWGTELWDQ…AAKSVDERRD (263 aa)) folds into the F-BAR domain. A coiled-coil region spans residues 66–258 (FTSCIAFFNI…EGMILAAKSV (193 aa)). The interval 245–535 (SKCLEGMILA…EFDDEFEDDD (291 aa)) is interaction with CDC42. Serine 295 carries the phosphoserine modification. The segment at 325 to 345 (FGKKPKPQSPPLTPTSLFTSS) is disordered. Residues 392–484 (LEDFSHLPPE…VEGKTGVRGD (93 aa)) adopt a coiled-coil conformation. The REM-1 domain maps to 397 to 474 (HLPPEQRRKK…IHKNEAWLSE (78 aa)). The segment covering 480–490 (GVRGDRRHSSD) has biased composition (basic and acidic residues). Positions 480-539 (GVRGDRRHSSDINHLVTQGRESPEGSYTDDANQEVRGPPQQHGHHSEFDDEFEDDDPLPA) are disordered. Residues serine 488, serine 501, and serine 505 each carry the phosphoserine modification. The tract at residues 522 to 605 (GHHSEFDDEF…VTLEKNSKGS (84 aa)) is interaction with DNM1. The segment covering 527-536 (FDDEFEDDDP) has biased composition (acidic residues). The SH3 domain occupies 538-599 (PAIGHCKAIY…PTTYIDVTLE (62 aa)). The interval 541–597 (GHCKAIYPFDGHNEGTLAMKEGEVLYIIEEDKGDGWTRARRQNGEEGYVPTTYIDVT) is interaction with DNM2 and WASL. The interval 541-605 (GHCKAIYPFD…VTLEKNSKGS (65 aa)) is interaction with DAAM1, DIAPH1 and DIAPH2.

Belongs to the FNBP1 family. Homodimerizes, the dimers can polymerize end-to-end to form filamentous structures. Interacts with GTP-bound CDC42. Interacts with DAAM1, DIAPH1, DIAPH2, DNM1, DNM2 and WASL/N-WASP. Interacts with ATG3. Interacts (via SH3 domain) with ABI1, WASF2, CDC42 and WIPF1. In terms of tissue distribution, isoform 1 is expressed in brain. Isoform 2 is expressed in brain, kidney and lung. Within the brain expression is seen in cortical neurons, hippocampal pyramidal neurons, hypothalamus and piriform cortex.

The protein localises to the cytoplasm. Its subcellular location is the cytoskeleton. The protein resides in the cell cortex. It localises to the cytoplasmic vesicle. It is found in the cell membrane. In terms of biological role, required to coordinate membrane tubulation with reorganization of the actin cytoskeleton during endocytosis. May bind to lipids such as phosphatidylinositol 4,5-bisphosphate and phosphatidylserine and promote membrane invagination and the formation of tubules. Also promotes CDC42-induced actin polymerization by activating the WASL-WASPIP complex, the predominant form of WASL/N-WASP in cells. Actin polymerization may promote the fission of membrane tubules to form endocytic vesicles. Essential for autophagy of intracellular bacterial pathogens. May negatively regulate neurite extension and axon branching in developing neurons. The sequence is that of Formin-binding protein 1-like (Fnbp1l) from Rattus norvegicus (Rat).